Reading from the N-terminus, the 385-residue chain is 1-deoxy-D-xylulose 5-phosphate reductoisomerase (385 aa).

Residues Thr-11, Gly-12, Ser-13, Ile-14, Gln-39, and Asn-117 each contribute to the NADPH site. Lys-118 serves as a coordination point for 1-deoxy-D-xylulose 5-phosphate. Glu-119 is a binding site for NADPH. Position 143 (Asp-143) interacts with Mn(2+). Ser-144, Glu-145, Ser-170, and His-193 together coordinate 1-deoxy-D-xylulose 5-phosphate. A Mn(2+)-binding site is contributed by Glu-145. Gly-199 lines the NADPH pocket. 4 residues coordinate 1-deoxy-D-xylulose 5-phosphate: Ser-206, Asn-211, Lys-212, and Glu-215. Mn(2+) is bound at residue Glu-215.

Belongs to the DXR family. The cofactor is Mg(2+). Mn(2+) serves as cofactor.

It catalyses the reaction 2-C-methyl-D-erythritol 4-phosphate + NADP(+) = 1-deoxy-D-xylulose 5-phosphate + NADPH + H(+). Its pathway is isoprenoid biosynthesis; isopentenyl diphosphate biosynthesis via DXP pathway; isopentenyl diphosphate from 1-deoxy-D-xylulose 5-phosphate: step 1/6. Functionally, catalyzes the NADPH-dependent rearrangement and reduction of 1-deoxy-D-xylulose-5-phosphate (DXP) to 2-C-methyl-D-erythritol 4-phosphate (MEP). The protein is 1-deoxy-D-xylulose 5-phosphate reductoisomerase of Thermomicrobium roseum (strain ATCC 27502 / DSM 5159 / P-2).